We begin with the raw amino-acid sequence, 263 residues long: Adaptin ear-binding coat-associated protein 2 (263 aa).

2 disordered regions span residues 166 to 194 (KKKE…PPGG) and 219 to 263 (APSS…WVQF). Residue S181 is modified to Phosphoserine. 2 short sequence motifs (WXXF motif) span residues 240–243 (WGDF) and 260–263 (WVQF). The segment covering 246–263 (STGSTSSQTQPGTGWVQF) has biased composition (low complexity).

It belongs to the NECAP family. As to quaternary structure, interacts with AP1G1 and AP2A1 components of the adapter protein complexes AP-1 and AP-2. Interacts with the GAE domain proteins GGA1, GGA2 and GGA3.

The protein localises to the cytoplasmic vesicle. It localises to the clathrin-coated vesicle membrane. The protein resides in the cell membrane. Functionally, involved in endocytosis. The polypeptide is Adaptin ear-binding coat-associated protein 2 (NECAP2) (Homo sapiens (Human)).